Here is a 146-residue protein sequence, read N- to C-terminus: Large ribosomal subunit protein bL9 (146 aa).

It belongs to the bacterial ribosomal protein bL9 family.

In terms of biological role, binds to the 23S rRNA. This is Large ribosomal subunit protein bL9 from Symbiobacterium thermophilum (strain DSM 24528 / JCM 14929 / IAM 14863 / T).